The primary structure comprises 758 residues: Protein hunchback (758 aa).

Disordered stretches follow at residues 30–51 (EPGH…PIPS) and 172–214 (EKLQ…EDMK). A compositionally biased stretch (polar residues) spans 39–51 (SVASSPRQSPIPS). A Phosphothreonine modification is found at T178. S188, S207, S209, and S210 each carry phosphoserine. The span at 198–214 (EPEKEHDQMSNSSEDMK) shows a compositional bias: basic and acidic residues. 4 C2H2-type zinc fingers span residues 240–262 (YKCK…TRTH), 269–291 (LQCP…IRKH), 297–319 (FQCD…RKSH), and 325–349 (YRCA…KYGH). Disordered stretches follow at residues 365 to 416 (LVID…PVAT) and 513 to 536 (QLQQ…YERK). Composition is skewed to low complexity over residues 398-415 (VAAV…QPVA) and 513-522 (QLQQQNQQQS). Residues 523 to 532 (DNEEEEQDDE) are compositionally biased toward acidic residues. Phosphoserine is present on residues S537 and S540. The disordered stretch occupies residues 603–695 (MTSPEQLKVP…TTSAVAAPPS (93 aa)). Low complexity predominate over residues 652 to 695 (ANTSASSTASSSGNSSNASSNSNGNSSSNSSSNGTTSAVAAPPS). C2H2-type zinc fingers lie at residues 705–727 (YECK…MGYH) and 733–757 (FKCN…RNAH).

Belongs to the hunchback C2H2-type zinc-finger protein family. In terms of tissue distribution, in embryo, expression of maternal transcript is highest in anterior region. Zygotic transcript is expressed in anterior region until the beginning of gastrulation and in posterior region until early gastrulation. After this, it is expressed in developing nervous system.

It localises to the nucleus. Functionally, gap class segmentation protein that controls development of head structures. This Drosophila melanogaster (Fruit fly) protein is Protein hunchback.